The following is a 5162-amino-acid chain: Linear gramicidin synthase subunit B (5162 aa).

Carrier domains follow at residues 963–1038 (APRN…QALR), 2027–2101 (EPQS…VVLE), 3541–3616 (APRN…GAIG), and 4601–4675 (AATS…GQST). An O-(pantetheine 4'-phosphoryl)serine mark is found at Ser-998, Ser-2062, Ser-3576, and Ser-4636.

It belongs to the ATP-dependent AMP-binding enzyme family. As to quaternary structure, large multienzyme complex composed of 4 subunits; LgrA, LgrB, LgrC and LgrD. Pantetheine 4'-phosphate is required as a cofactor.

Its function is as follows. Activates the 3rd to 6th amino acids (Ala, D-Leu, Ala and D-Val) in linear gramicidin and catalyzes the formation of the peptide bond between them. This enzyme is also responsible for the epimerization of the 4th (D-Leu) and the 6th (D-Val) amino acids. The chain is Linear gramicidin synthase subunit B (lgrB) from Brevibacillus parabrevis.